The chain runs to 619 residues: Chaperone protein HscA homolog (619 aa).

It belongs to the heat shock protein 70 family.

In terms of biological role, chaperone involved in the maturation of iron-sulfur cluster-containing proteins. Has a low intrinsic ATPase activity which is markedly stimulated by HscB. This is Chaperone protein HscA homolog from Pseudomonas aeruginosa (strain UCBPP-PA14).